A 544-amino-acid polypeptide reads, in one-letter code: Glutamyl-tRNA(Gln) amidotransferase subunit B, chloroplastic/mitochondrial (544 aa).

The protein belongs to the GatB/GatE family. GatB subfamily. Subunit of the heterotrimeric GatCAB amidotransferase (AdT) complex, composed of A, B and C subunits.

It localises to the mitochondrion. It is found in the plastid. Its subcellular location is the chloroplast. It carries out the reaction L-glutamyl-tRNA(Gln) + L-glutamine + ATP + H2O = L-glutaminyl-tRNA(Gln) + L-glutamate + ADP + phosphate + H(+). In terms of biological role, allows the formation of correctly charged Gln-tRNA(Gln) through the transamidation of misacylated Glu-tRNA(Gln) in chloroplasts and mitochondria. The reaction takes place in the presence of glutamine and ATP through an activated gamma-phospho-Glu-tRNA(Gln). This Oryza sativa subsp. japonica (Rice) protein is Glutamyl-tRNA(Gln) amidotransferase subunit B, chloroplastic/mitochondrial.